The chain runs to 236 residues: Small ribosomal subunit protein uS2c (236 aa).

The protein belongs to the universal ribosomal protein uS2 family.

It localises to the plastid. The protein localises to the chloroplast. This Manihot esculenta (Cassava) protein is Small ribosomal subunit protein uS2c (rps2).